Consider the following 510-residue polypeptide: Ent-sandaracopimaradiene 3-hydroxylase (510 aa).

The chain crosses the membrane as a helical span at residues 4–24; sequence MLVAGAGAAAVAAVGGLVAAA. Cys454 provides a ligand contact to heme.

Belongs to the cytochrome P450 family. As to quaternary structure, interacts with the rice dwarf virus (RDV) P2 protein. The cofactor is heme. Expressed in leaf blades and sheaths, stems and panicles.

The protein localises to the membrane. The catalysed reaction is ent-sandaracopimara-8(14),15-diene + reduced [NADPH--hemoprotein reductase] + O2 = ent-sandaracopimaradien-3beta-ol + oxidized [NADPH--hemoprotein reductase] + H2O + H(+). It carries out the reaction 9beta-pimara-7,15-diene + reduced [NADPH--hemoprotein reductase] + O2 = 9beta-pimara-7,15-diene-3beta-ol + oxidized [NADPH--hemoprotein reductase] + H2O + H(+). Catalyzes the hydroxylation of ent-sandaracopimaradiene at the C3alpha position to produce ent-3beta-hydroxy-sandaracopimaradiene, an intermediates for the biosynthesis of oryzalexin D and oryzalexin E phytoalexins. Catalyzes the hydroxylation of ent-cassadiene at the C3alpha position to produce 3alpha-hydroxy-ent-cassadiene, which may be an intermediate for the biosynthesis of phytocassane phytoalexins. Catalyzes the hydroxylation of syn-pimaradiene (9-beta-pimara-7,15-diene) at the C3beta position to produce 3-beta-syn-pimaradiene. Can hydroxylate ent-kaurene in vitro, but the product is not ent-kauren-19-ol as expected for ent-kaurene oxidase activity. The chain is Ent-sandaracopimaradiene 3-hydroxylase from Oryza sativa subsp. japonica (Rice).